The sequence spans 422 residues: Probable glycosidase CRR1 (422 aa).

The first 20 residues, 1–20 (MRISILQLVPVVGYIGFALG), serve as a signal peptide directing secretion. A GH16 domain is found at 67–339 (DEESCAPIPA…WENSPDIIEK (273 aa)). E217 functions as the Nucleophile in the catalytic mechanism. E221 acts as the Proton donor in catalysis.

Belongs to the glycosyl hydrolase 16 family. CRR1 subfamily.

The protein resides in the spore wall. In terms of biological role, spore specific glycosidase involved in spore wall assembly during sporulation. May be involved in copper import. This Saccharomyces cerevisiae (strain ATCC 204508 / S288c) (Baker's yeast) protein is Probable glycosidase CRR1 (CRR1).